A 366-amino-acid chain; its full sequence is 3-dehydroquinate synthase (366 aa).

Residues D75–K80, G109–D113, T133–T134, K146, K155, and C173–T176 each bind NAD(+). Residues E188, H251, and H268 each contribute to the Zn(2+) site.

Belongs to the sugar phosphate cyclases superfamily. Dehydroquinate synthase family. It depends on Co(2+) as a cofactor. Zn(2+) serves as cofactor. Requires NAD(+) as cofactor.

The protein resides in the cytoplasm. It carries out the reaction 7-phospho-2-dehydro-3-deoxy-D-arabino-heptonate = 3-dehydroquinate + phosphate. The protein operates within metabolic intermediate biosynthesis; chorismate biosynthesis; chorismate from D-erythrose 4-phosphate and phosphoenolpyruvate: step 2/7. Catalyzes the conversion of 3-deoxy-D-arabino-heptulosonate 7-phosphate (DAHP) to dehydroquinate (DHQ). This is 3-dehydroquinate synthase from Vibrio campbellii (strain ATCC BAA-1116).